The primary structure comprises 149 residues: Calmodulin (149 aa).

An N-acetylalanine modification is found at alanine 2. 4 consecutive EF-hand domains span residues 8–43, 44–79, 81–116, and 117–149; these read EQIA…LGQN, PTEA…KMKD, DSEE…LGEK, and LTDE…MMAK. Aspartate 21, aspartate 23, aspartate 25, threonine 27, glutamate 32, aspartate 57, aspartate 59, asparagine 61, threonine 63, glutamate 68, aspartate 94, aspartate 96, asparagine 98, and glutamate 105 together coordinate Ca(2+). At lysine 116 the chain carries N6,N6,N6-trimethyllysine. 5 residues coordinate Ca(2+): aspartate 130, aspartate 132, aspartate 134, glutamine 136, and glutamate 141.

This sequence belongs to the calmodulin family.

Calmodulin mediates the control of a large number of enzymes, ion channels and other proteins by Ca(2+). Among the enzymes to be stimulated by the calmodulin-Ca(2+) complex are a number of protein kinases and phosphatases. This chain is Calmodulin, found in Macrocystis pyrifera (Giant kelp).